Here is a 285-residue protein sequence, read N- to C-terminus: MARHVWQAGRFEIGLDKPKIMGIVNLTPDSFSDGGVYSQNAQTALAHAEQLLKEGADILDIGGESTRSGADYVSPEEEWARVEPVLAEVAGWGVPISLDTRRTVIMEKALALGGIDIINDVAALNDEGAVELLARQADTGICLMHMQGLPKTMQINPKYQDVVGEVARYLKARSAECIAAGIAPQRIILDPGFGSGFGKPLQHNIALMRHLPELMAETGFPLLIGVSRKSTIGELTGEANAAERVHGSVAAALASVARGAQIVRVHDVKATADALKVWEALGINL.

The region spanning 18–276 (PKIMGIVNLT…DVKATADALK (259 aa)) is the Pterin-binding domain. N25 serves as a coordination point for Mg(2+). Residues T66, D99, N119, D190, K229, and 264–266 (RVH) each bind (7,8-dihydropterin-6-yl)methyl diphosphate.

It belongs to the DHPS family. As to quaternary structure, homodimer. Mg(2+) is required as a cofactor.

The catalysed reaction is (7,8-dihydropterin-6-yl)methyl diphosphate + 4-aminobenzoate = 7,8-dihydropteroate + diphosphate. It participates in cofactor biosynthesis; tetrahydrofolate biosynthesis; 7,8-dihydrofolate from 2-amino-4-hydroxy-6-hydroxymethyl-7,8-dihydropteridine diphosphate and 4-aminobenzoate: step 1/2. Catalyzes the condensation of para-aminobenzoate (pABA) with 6-hydroxymethyl-7,8-dihydropterin diphosphate (DHPt-PP) to form 7,8-dihydropteroate (H2Pte), the immediate precursor of folate derivatives. The protein is Dihydropteroate synthase (folP) of Neisseria meningitidis serogroup B (strain ATCC BAA-335 / MC58).